The chain runs to 375 residues: Queuine tRNA-ribosyltransferase (375 aa).

The Proton acceptor role is filled by Asp-89. Residues 89–93 (DSGGF), Asp-143, Gln-187, and Gly-214 each bind substrate. Positions 245–251 (GVGKPED) are RNA binding. Asp-264 serves as the catalytic Nucleophile. The interval 269–273 (TRNAR) is RNA binding; important for wobble base 34 recognition. Positions 302, 304, 307, and 333 each coordinate Zn(2+).

This sequence belongs to the queuine tRNA-ribosyltransferase family. In terms of assembly, homodimer. Within each dimer, one monomer is responsible for RNA recognition and catalysis, while the other monomer binds to the replacement base PreQ1. Zn(2+) serves as cofactor.

The enzyme catalyses 7-aminomethyl-7-carbaguanine + guanosine(34) in tRNA = 7-aminomethyl-7-carbaguanosine(34) in tRNA + guanine. The protein operates within tRNA modification; tRNA-queuosine biosynthesis. In terms of biological role, catalyzes the base-exchange of a guanine (G) residue with the queuine precursor 7-aminomethyl-7-deazaguanine (PreQ1) at position 34 (anticodon wobble position) in tRNAs with GU(N) anticodons (tRNA-Asp, -Asn, -His and -Tyr). Catalysis occurs through a double-displacement mechanism. The nucleophile active site attacks the C1' of nucleotide 34 to detach the guanine base from the RNA, forming a covalent enzyme-RNA intermediate. The proton acceptor active site deprotonates the incoming PreQ1, allowing a nucleophilic attack on the C1' of the ribose to form the product. After dissociation, two additional enzymatic reactions on the tRNA convert PreQ1 to queuine (Q), resulting in the hypermodified nucleoside queuosine (7-(((4,5-cis-dihydroxy-2-cyclopenten-1-yl)amino)methyl)-7-deazaguanosine). The protein is Queuine tRNA-ribosyltransferase of Salmonella choleraesuis (strain SC-B67).